Reading from the N-terminus, the 606-residue chain is MKWITLICLLISSTLIESRIIFKRDTDVDHHKHIADMYNLLTERTFKGLTLAIVSQNLQKCSLEELSKLVNEINDFAKSCTGNDKTPECEKPIGTLFYDKLCADPKVGVNYEWSKECCSKQDPERAQCFRAHRVFEHNPVRPKPEETCALFKEHPDDLLSAFIHEEARNHPDLYPPAVLLLTQQYGKLVEHCCEEEDKDKCFAEKMKELMKHSHSIEDKQKHFCWIVNNYPERVIKALNLARVSHRYPKPDFKLAHKFTEETTHFIKDCCHGDMFECMTERLELSEHTCQHKDELSTKLEKCCNLPLLERTYCIVTLENDDVPAELSKPITEFTEDPHVCEKYAENKSFLEISPWQSQETPELSEQFLLQSAKEYESLLNKCCFSDNPPECYKDGADRFMNEAKERFAYLKQNCDILHEHGEYLFENELLIRYTKKMPQVSDETLIGIAHQMADIGEHCCAVPENQRMPCAEGDLTILIGKMCERQKKTFINNHVAHCCTDSYSGMRSCFTALGPDEDYVPPPVTDDTFHFDDKICTANDKEKQHIKQKFLVKLIKVSPKLEKNHIDEWLLEFLKMVQKCCTADEHQPCFDTEKPVLIEHCQKLHP.

The N-terminal stretch at 1–18 (MKWITLICLLISSTLIES) is a signal peptide. The propeptide occupies 19–24 (RIIFKR). Albumin domains are found at residues 22–211 (FKRD…ELMK), 212–401 (HSHS…RFMN), and 402–599 (EAKE…VLIE). H30 is a binding site for Cu cation. 17 disulfide bridges follow: C80-C89, C102-C118, C117-C128, C148-C193, C192-C201, C224-C270, C269-C277, C289-C303, C302-C313, C340-C383, C382-C391, C414-C460, C459-C470, C483-C499, C498-C509, C536-C581, and C580-C589.

Belongs to the ALB/AFP/VDB family. As to expression, plasma.

It localises to the secreted. Binds water, Ca(2+), Na(+), K(+), fatty acids, hormones, bilirubin and drugs. Its main function is the regulation of the colloidal osmotic pressure of blood. In Xenopus laevis (African clawed frog), this protein is Albumin A (alb-a).